Consider the following 403-residue polypeptide: Cytochrome P450 monooxygenase ustC (403 aa).

Positions 1–18 (MSPFIFAVTLTFAILALG) are cleaved as a signal peptide. Residues asparagine 52 and asparagine 92 are each glycosylated (N-linked (GlcNAc...) asparagine). Cysteine 318 contacts heme.

It belongs to the cytochrome P450 family. The cofactor is heme.

Its pathway is mycotoxin biosynthesis. Its function is as follows. Cytochrome P450 monooxygenase; part of the gene cluster that mediates the biosynthesis of the secondary metabolite ustiloxin B, an antimitotic tetrapeptide. First, ustA is processed by the subtilisin-like endoprotease Kex2 that is outside the ustiloxin B gene cluster, at the C-terminal side of Arg-Lys, after transfer to Golgi apparatus through the endoplasmic reticulum (ER). Cleavage by KEX2 generates 16 peptides YAIG-I to YAIG-XVI. To process the precursor peptide further, at least two peptidases are necessary to cleave the N-terminal and C-terminal sides of the Tyr-Ala-Ile-Gly core peptide which serves as backbone for the synthesis of ustiloxin B, through cyclization and modification of the tyrosine with a non-protein coding amino acid, norvaline. One of the two peptidases must be the serine peptidase ustP; and the other pepdidase is probably ustH. Macrocyclization of the core peptide derived from ustA requires the tyrosinase ustQ, as well as the homologous oxidases ustYa and ustYb, and leads to the production of the first cyclization product N-desmethylustiloxin F. For the formation of N-desmethylustiloxin F, three oxidation steps are required, hydroxylation at the benzylic position, hydroxylation at either the aromatic ring of Tyr or beta-position of Ile, and oxidative cyclization. UstQ may catalyze the oxidation of a phenol moiety, whereas the ustYa and ustYb are most likely responsible for the remaining two-step oxidations. N-desmethylustiloxin F is then methylated by ustM to yield ustiloxin F which in turn substrate of the cytochrome P450 monooxygenase ustC which catalyzes the formation of S-deoxyustiloxin H. The flavoprotein monooxygenases ustF1 and ustF2 then participate in the modification of the side chain of S-deoxyustiloxin H, leading to the synthesis of an oxime intermediate, via ustiloxin H. Finally, carboxylative dehydration performed by the cysteine desulfurase-like protein ustD yields ustiloxin B. In Aspergillus flavus (strain ATCC 200026 / FGSC A1120 / IAM 13836 / NRRL 3357 / JCM 12722 / SRRC 167), this protein is Cytochrome P450 monooxygenase ustC.